We begin with the raw amino-acid sequence, 645 residues long: 1-deoxy-D-xylulose-5-phosphate synthase (645 aa).

Thiamine diphosphate contacts are provided by residues H83 and 124-126; that span reads GHS. D155 provides a ligand contact to Mg(2+). Residues 156–157, N184, Y295, and E376 each bind thiamine diphosphate; that span reads GS. N184 contributes to the Mg(2+) binding site.

The protein belongs to the transketolase family. DXPS subfamily. In terms of assembly, homodimer. Requires Mg(2+) as cofactor. It depends on thiamine diphosphate as a cofactor.

It carries out the reaction D-glyceraldehyde 3-phosphate + pyruvate + H(+) = 1-deoxy-D-xylulose 5-phosphate + CO2. Its pathway is metabolic intermediate biosynthesis; 1-deoxy-D-xylulose 5-phosphate biosynthesis; 1-deoxy-D-xylulose 5-phosphate from D-glyceraldehyde 3-phosphate and pyruvate: step 1/1. Its function is as follows. Catalyzes the acyloin condensation reaction between C atoms 2 and 3 of pyruvate and glyceraldehyde 3-phosphate to yield 1-deoxy-D-xylulose-5-phosphate (DXP). This chain is 1-deoxy-D-xylulose-5-phosphate synthase, found in Desulfotalea psychrophila (strain LSv54 / DSM 12343).